Here is a 615-residue protein sequence, read N- to C-terminus: Protein DBF4 homolog B (615 aa).

One can recognise a BRCT domain in the interval 43 to 133 (ARKHPFSGKS…DPKGSHPRPS (91 aa)). Disordered stretches follow at residues 93 to 141 (REVK…DSVP) and 264 to 293 (FEAP…AHTM). Residues 275–284 (HTRESKDGEP) show a composition bias toward basic and acidic residues. Residues 294–343 (PRRKKGYCECCQEAFEELHVHLQSAQHRSFALEAHLYAEVDRIIAQLSHS) form a DBF4-type zinc finger. Zn(2+) is bound by residues C301, C304, H314, and H320. Residues 371–407 (TLHPHQPSHPRAASPRIRKEDSCQASVTQGRAAGQQR) form a disordered region.

Forms a complex with CDC7. Note that CDC7 forms distinct complex either with DBF4/DBF4A or DBF4B. Such complexes are stable upon replication stress. Post-translationally, phosphorylated. Widely expressed. Highly expressed in testis.

It localises to the nucleus. In terms of biological role, regulatory subunit for CDC7 which activates its kinase activity thereby playing a central role in DNA replication and cell proliferation. Required for progression of S and M phases. The complex CDC7-DBF4B selectively phosphorylates MCM2 subunit at 'Ser-40' and then is involved in regulating the initiation of DNA replication during cell cycle. This chain is Protein DBF4 homolog B (DBF4B), found in Homo sapiens (Human).